Consider the following 190-residue polypeptide: Xanthine phosphoribosyltransferase (190 aa).

Positions 20 and 27 each coordinate xanthine. 129–133 lines the 5-phospho-alpha-D-ribose 1-diphosphate pocket; it reads ANGAA. Lysine 157 is a xanthine binding site.

The protein belongs to the purine/pyrimidine phosphoribosyltransferase family. Xpt subfamily. In terms of assembly, homodimer.

The protein localises to the cytoplasm. The catalysed reaction is XMP + diphosphate = xanthine + 5-phospho-alpha-D-ribose 1-diphosphate. The protein operates within purine metabolism; XMP biosynthesis via salvage pathway; XMP from xanthine: step 1/1. In terms of biological role, converts the preformed base xanthine, a product of nucleic acid breakdown, to xanthosine 5'-monophosphate (XMP), so it can be reused for RNA or DNA synthesis. This is Xanthine phosphoribosyltransferase from Laribacter hongkongensis (strain HLHK9).